A 254-amino-acid chain; its full sequence is 14-3-3-like protein RA215 (254 aa).

This sequence belongs to the 14-3-3 family.

This is 14-3-3-like protein RA215 from Solanum tuberosum (Potato).